The following is a 166-amino-acid chain: Arginine repressor (166 aa).

It belongs to the ArgR family.

It is found in the cytoplasm. It functions in the pathway amino-acid biosynthesis; L-arginine biosynthesis [regulation]. Regulates arginine biosynthesis genes. The protein is Arginine repressor of Mycobacterium ulcerans (strain Agy99).